The primary structure comprises 120 residues: NAD(P)H-quinone oxidoreductase subunit 3, chloroplastic (120 aa).

3 helical membrane passes run 9–29 (IFWA…LISG), 64–84 (MFAL…PWAM), and 88–108 (VLGV…IVGS).

This sequence belongs to the complex I subunit 3 family. In terms of assembly, NDH is composed of at least 16 different subunits, 5 of which are encoded in the nucleus.

It localises to the plastid. Its subcellular location is the chloroplast thylakoid membrane. It catalyses the reaction a plastoquinone + NADH + (n+1) H(+)(in) = a plastoquinol + NAD(+) + n H(+)(out). It carries out the reaction a plastoquinone + NADPH + (n+1) H(+)(in) = a plastoquinol + NADP(+) + n H(+)(out). Functionally, NDH shuttles electrons from NAD(P)H:plastoquinone, via FMN and iron-sulfur (Fe-S) centers, to quinones in the photosynthetic chain and possibly in a chloroplast respiratory chain. The immediate electron acceptor for the enzyme in this species is believed to be plastoquinone. Couples the redox reaction to proton translocation, and thus conserves the redox energy in a proton gradient. The protein is NAD(P)H-quinone oxidoreductase subunit 3, chloroplastic of Liriodendron tulipifera (Tuliptree).